Here is a 521-residue protein sequence, read N- to C-terminus: Bacillolysin (521 aa).

The first 27 residues, Met1–Ala27, serve as a signal peptide directing secretion. The propeptide at Ala28–His221 is activation peptide. Ca(2+) contacts are provided by Gln283 and Asp360. Residue His364 participates in Zn(2+) binding. Residue Glu365 is part of the active site. Positions 368 and 388 each coordinate Zn(2+). Ca(2+) contacts are provided by Asp399, Asp402, Asp404, Glu407, and Val411. Residue His449 is the Proton donor of the active site.

This sequence belongs to the peptidase M4 family. The cofactor is Ca(2+). It depends on Zn(2+) as a cofactor.

The protein localises to the secreted. The enzyme catalyses Similar, but not identical, to that of thermolysin.. Functionally, extracellular zinc metalloprotease. The polypeptide is Bacillolysin (npr) (Bacillus amyloliquefaciens (Bacillus velezensis)).